Here is a 424-residue protein sequence, read N- to C-terminus: Proline--tRNA ligase (424 aa).

Belongs to the class-II aminoacyl-tRNA synthetase family. ProS type 2 subfamily. In terms of assembly, homodimer.

The protein localises to the cytoplasm. The enzyme catalyses tRNA(Pro) + L-proline + ATP = L-prolyl-tRNA(Pro) + AMP + diphosphate. Its function is as follows. Catalyzes the attachment of proline to tRNA(Pro) in a two-step reaction: proline is first activated by ATP to form Pro-AMP and then transferred to the acceptor end of tRNA(Pro). The sequence is that of Proline--tRNA ligase from Ehrlichia canis (strain Jake).